Reading from the N-terminus, the 277-residue chain is Ribosomal RNA small subunit methyltransferase A (277 aa).

Residues Asn26, Leu28, Gly53, Glu74, Asp101, and Asn123 each coordinate S-adenosyl-L-methionine.

It belongs to the class I-like SAM-binding methyltransferase superfamily. rRNA adenine N(6)-methyltransferase family. RsmA subfamily.

Its subcellular location is the cytoplasm. The enzyme catalyses adenosine(1518)/adenosine(1519) in 16S rRNA + 4 S-adenosyl-L-methionine = N(6)-dimethyladenosine(1518)/N(6)-dimethyladenosine(1519) in 16S rRNA + 4 S-adenosyl-L-homocysteine + 4 H(+). In terms of biological role, specifically dimethylates two adjacent adenosines (A1518 and A1519) in the loop of a conserved hairpin near the 3'-end of 16S rRNA in the 30S particle. May play a critical role in biogenesis of 30S subunits. This is Ribosomal RNA small subunit methyltransferase A from Opitutus terrae (strain DSM 11246 / JCM 15787 / PB90-1).